A 139-amino-acid chain; its full sequence is uncharacterized protein (139 aa).

The span at 1–11 shows a compositional bias: polar residues; sequence MALSMSLSSDI. Disordered regions lie at residues 1 to 80 and 100 to 139; these read MALS…AAAA and ASSP…LARS. Over residues 63–80 the composition is skewed to low complexity; the sequence is GAGSASAGGSRLAAAAAA.

This is an uncharacterized protein from Homo sapiens (Human).